We begin with the raw amino-acid sequence, 227 residues long: 2-C-methyl-D-erythritol 4-phosphate cytidylyltransferase (227 aa).

The protein belongs to the IspD/TarI cytidylyltransferase family. IspD subfamily.

It catalyses the reaction 2-C-methyl-D-erythritol 4-phosphate + CTP + H(+) = 4-CDP-2-C-methyl-D-erythritol + diphosphate. It participates in isoprenoid biosynthesis; isopentenyl diphosphate biosynthesis via DXP pathway; isopentenyl diphosphate from 1-deoxy-D-xylulose 5-phosphate: step 2/6. Catalyzes the formation of 4-diphosphocytidyl-2-C-methyl-D-erythritol from CTP and 2-C-methyl-D-erythritol 4-phosphate (MEP). The sequence is that of 2-C-methyl-D-erythritol 4-phosphate cytidylyltransferase from Nostoc punctiforme (strain ATCC 29133 / PCC 73102).